The primary structure comprises 370 residues: 3-dehydroquinate synthase (370 aa).

NAD(+)-binding positions include 70–75, 104–108, 128–129, Lys141, Lys150, and 168–171; these read DAEDGK, GAATD, TT, and TLET. Positions 183, 246, and 262 each coordinate Zn(2+).

It belongs to the sugar phosphate cyclases superfamily. Dehydroquinate synthase family. Co(2+) serves as cofactor. It depends on Zn(2+) as a cofactor. NAD(+) is required as a cofactor.

It is found in the cytoplasm. The catalysed reaction is 7-phospho-2-dehydro-3-deoxy-D-arabino-heptonate = 3-dehydroquinate + phosphate. It participates in metabolic intermediate biosynthesis; chorismate biosynthesis; chorismate from D-erythrose 4-phosphate and phosphoenolpyruvate: step 2/7. In terms of biological role, catalyzes the conversion of 3-deoxy-D-arabino-heptulosonate 7-phosphate (DAHP) to dehydroquinate (DHQ). The protein is 3-dehydroquinate synthase of Rhodococcus opacus (strain B4).